We begin with the raw amino-acid sequence, 259 residues long: Uridylate kinase (259 aa).

Position 10–13 (10–13 (KLSG)) interacts with ATP. Gly-52 contacts UMP. 2 residues coordinate ATP: Gly-53 and Arg-57. UMP is bound by residues Asp-72 and 134–141 (NGQPFLTT). The ATP site is built by Tyr-168 and Asp-171. Positions 236-259 (ISSSPEKSEEFGNEVLASPAESTA) are disordered.

Belongs to the UMP kinase family. Homohexamer.

It is found in the cytoplasm. It catalyses the reaction UMP + ATP = UDP + ADP. The protein operates within pyrimidine metabolism; CTP biosynthesis via de novo pathway; UDP from UMP (UMPK route): step 1/1. With respect to regulation, inhibited by UTP. Functionally, catalyzes the reversible phosphorylation of UMP to UDP. The protein is Uridylate kinase of Frankia casuarinae (strain DSM 45818 / CECT 9043 / HFP020203 / CcI3).